A 101-amino-acid polypeptide reads, in one-letter code: NADH-quinone oxidoreductase subunit K (101 aa).

Transmembrane regions (helical) follow at residues 4–24 (LAHF…GIFL), 30–50 (IVLL…FVAF), and 61–81 (VFVF…LAIL).

This sequence belongs to the complex I subunit 4L family. In terms of assembly, NDH-1 is composed of 14 different subunits. Subunits NuoA, H, J, K, L, M, N constitute the membrane sector of the complex.

The protein localises to the cell inner membrane. It catalyses the reaction a quinone + NADH + 5 H(+)(in) = a quinol + NAD(+) + 4 H(+)(out). In terms of biological role, NDH-1 shuttles electrons from NADH, via FMN and iron-sulfur (Fe-S) centers, to quinones in the respiratory chain. The immediate electron acceptor for the enzyme in this species is believed to be ubiquinone. Couples the redox reaction to proton translocation (for every two electrons transferred, four hydrogen ions are translocated across the cytoplasmic membrane), and thus conserves the redox energy in a proton gradient. This chain is NADH-quinone oxidoreductase subunit K, found in Cupriavidus pinatubonensis (strain JMP 134 / LMG 1197) (Cupriavidus necator (strain JMP 134)).